The following is a 411-amino-acid chain: Citrate synthase (411 aa).

Catalysis depends on residues H304 and D363.

The protein belongs to the citrate synthase family.

It catalyses the reaction oxaloacetate + acetyl-CoA + H2O = citrate + CoA + H(+). It participates in carbohydrate metabolism; tricarboxylic acid cycle; isocitrate from oxaloacetate: step 1/2. The sequence is that of Citrate synthase (gltA) from Rickettsia akari.